We begin with the raw amino-acid sequence, 189 residues long: Cancer/testis antigen family 45 member A5 (189 aa).

The segment covering Met-1–Asp-23 has biased composition (basic and acidic residues). 2 disordered regions span residues Met-1–Tyr-27 and Asp-82–Ser-118.

Belongs to the CT45 family. Testis specific. Expressed in cancer cell lines.

It localises to the nucleus. This Homo sapiens (Human) protein is Cancer/testis antigen family 45 member A5.